Reading from the N-terminus, the 166-residue chain is Lipoprotein signal peptidase (166 aa).

4 helical membrane-spanning segments follow: residues 11–31 (LNLV…LYIL), 42–62 (IYIT…AFGL), 69–89 (VIYN…IFMM), and 99–119 (FFAL…VYTA). Active-site residues include Asp-122 and Asp-140. The chain crosses the membrane as a helical span at residues 133 to 153 (WFVFNVADIFITIGVFCLILV).

The protein belongs to the peptidase A8 family.

It is found in the cell inner membrane. It catalyses the reaction Release of signal peptides from bacterial membrane prolipoproteins. Hydrolyzes -Xaa-Yaa-Zaa-|-(S,diacylglyceryl)Cys-, in which Xaa is hydrophobic (preferably Leu), and Yaa (Ala or Ser) and Zaa (Gly or Ala) have small, neutral side chains.. Its pathway is protein modification; lipoprotein biosynthesis (signal peptide cleavage). In terms of biological role, this protein specifically catalyzes the removal of signal peptides from prolipoproteins. This Pelagibacter ubique (strain HTCC1062) protein is Lipoprotein signal peptidase.